The sequence spans 365 residues: Phenoloxidase-activating factor 1 (365 aa).

The N-terminal stretch at 1–23 (MKQVHFFILWFFVLNLYSIKAQA) is a signal peptide. A Clip domain is found at 24 to 74 (GCRTPNGENARCVPINNCKILYDSVLTSDPEVIRFLRASQCGYNGQPLVCC). 8 disulfides stabilise this stretch: Cys25–Cys73, Cys35–Cys64, Cys41–Cys74, Cys101–Cys240, Cys140–Cys156, Cys184–Cys191, Cys284–Cys301, and Cys311–Cys340. The region spanning 110 to 364 (ILNGDDTVPE…YRDWIEGNIR (255 aa)) is the Peptidase S1 domain. The N-linked (GlcNAc...) asparagine glycan is linked to Asn131. His155 (charge relay system) is an active-site residue. Residues Glu175, Asn177, Thr180, and Asp183 each coordinate Ca(2+). Residue Asp220 is the Charge relay system of the active site. Ser315 acts as the Charge relay system in catalysis.

It belongs to the peptidase S1 family. CLIP subfamily. In the active form, heterodimer of a light chain and a heavy chain; disulfide-linked. Cleaved following the recognition of pathogen-derived products, probably by a lysyl endopeptidase.

The protein localises to the secreted. With respect to regulation, protein stability and endopeptidase activity are calcium dependent. First cleavage on prophenoloxidase PPO1 and PPO2 is not dependent on calcium; however, cleavage of PPO1 and PPO2 to their active forms is dependent on calcium and on the presence of PPAF2 and PPAF3. Cleavage of PPAF2 is inhibited by calcium. Inhibited by ethylenediaminetetraacetic acid (EDTA), p-nitrophenyl-p'-guanido-benzoate, diisopropylphosphorofluoridate (iPr2PF) and p-(Amidinophenyl)methanesulfonyl fluoride (p-APMSF). Serine endopeptidase which, by cleaving prophenoloxidase PPO1 and PPO2, is required for the activation of the prophenoloxidase cascade probably following the recognition of pathogen-derived products. The polypeptide is Phenoloxidase-activating factor 1 (Holotrichia diomphalia (Korean black chafer)).